The sequence spans 159 residues: Cytochrome c-type biogenesis protein CcmE (159 aa).

The Cytoplasmic segment spans residues 1–8 (MNIRRKNR). The chain crosses the membrane as a helical; Signal-anchor for type II membrane protein span at residues 9-29 (LWIACAVLAGLALTIGLVLYA). Residues 30–159 (LRSNIDLFYT…PASVYKDPAS (130 aa)) are Periplasmic-facing. Heme is bound by residues His130 and Tyr134. Residues 132–147 (ENYTPPEVEKAMEANH) show a composition bias toward basic and acidic residues. The interval 132–159 (ENYTPPEVEKAMEANHRRPASVYKDPAS) is disordered.

The protein belongs to the CcmE/CycJ family.

The protein resides in the cell inner membrane. In terms of biological role, heme chaperone required for the biogenesis of c-type cytochromes. Transiently binds heme delivered by CcmC and transfers the heme to apo-cytochromes in a process facilitated by CcmF and CcmH. The polypeptide is Cytochrome c-type biogenesis protein CcmE (Shigella sonnei (strain Ss046)).